The primary structure comprises 477 residues: Zinc metalloproteinase/disintegrin (477 aa).

Residues 1 to 19 (MIQVLLVIICLAVPYQGSS) form the signal peptide. Positions 20 to 186 (IILESGNVND…PIKKASQSNL (167 aa)) are excised as a propeptide. The region spanning 192 to 388 (RYIELVIVAD…QKPQCILNKP (197 aa)) is the Peptidase M12B domain. Positions 195 and 279 each coordinate Ca(2+). Cystine bridges form between Cys-303–Cys-383, Cys-343–Cys-367, and Cys-345–Cys-350. Position 328 (His-328) interacts with Zn(2+). Residue Glu-329 is part of the active site. Positions 332 and 338 each coordinate Zn(2+). Ca(2+) contacts are provided by Cys-383 and Asn-386. A propeptide spanning residues 389-404 (LRTDTVSTPVSGNELL) is cleaved from the precursor. The 82-residue stretch at 396–477 (TPVSGNELLE…AGCPRNPFHA (82 aa)) folds into the Disintegrin domain. Intrachain disulfides connect Cys-410–Cys-425, Cys-412–Cys-420, Cys-419–Cys-442, Cys-433–Cys-439, Cys-438–Cys-463, and Cys-451–Cys-470. Residues 455 to 457 (RGD) carry the Cell attachment site motif.

It belongs to the venom metalloproteinase (M12B) family. P-II subfamily. P-IIa sub-subfamily. In terms of assembly, monomer. Zn(2+) serves as cofactor. In terms of tissue distribution, expressed by the venom gland.

It is found in the secreted. Its function is as follows. Impairs hemostasis in the envenomed animal. In terms of biological role, inhibits platelet aggregation induced by ADP, thrombin, platelet-activating factor and collagen. Acts by inhibiting fibrinogen interaction with platelet receptors GPIIb/GPIIIa (ITGA2B/ITGB3). The polypeptide is Zinc metalloproteinase/disintegrin (Gloydius halys (Chinese water mocassin)).